A 315-amino-acid polypeptide reads, in one-letter code: Ribose-phosphate pyrophosphokinase (315 aa).

Residues 37-39 (DGE) and 96-97 (RQ) each bind ATP. The Mg(2+) site is built by H131 and D170. K194 is a catalytic residue. D-ribose 5-phosphate contacts are provided by residues R196, D220, and 224-228 (DTGGT).

This sequence belongs to the ribose-phosphate pyrophosphokinase family. Class I subfamily. Homohexamer. It depends on Mg(2+) as a cofactor.

Its subcellular location is the cytoplasm. It catalyses the reaction D-ribose 5-phosphate + ATP = 5-phospho-alpha-D-ribose 1-diphosphate + AMP + H(+). The protein operates within metabolic intermediate biosynthesis; 5-phospho-alpha-D-ribose 1-diphosphate biosynthesis; 5-phospho-alpha-D-ribose 1-diphosphate from D-ribose 5-phosphate (route I): step 1/1. In terms of biological role, involved in the biosynthesis of the central metabolite phospho-alpha-D-ribosyl-1-pyrophosphate (PRPP) via the transfer of pyrophosphoryl group from ATP to 1-hydroxyl of ribose-5-phosphate (Rib-5-P). The protein is Ribose-phosphate pyrophosphokinase of Shewanella oneidensis (strain ATCC 700550 / JCM 31522 / CIP 106686 / LMG 19005 / NCIMB 14063 / MR-1).